Consider the following 728-residue polypeptide: Golgin subfamily A member 5 (728 aa).

Ser2 is modified (N-acetylserine). Residues 2–695 lie on the Cytoplasmic side of the membrane; it reads SWFADLAGRA…IFLRRYPIAR (694 aa). Dimethylated arginine is present on residues Arg27 and Arg89. Residues 88–202 form a disordered region; it reads SRTGGDASHP…KKSTEESTVS (115 aa). Ser116 is modified (phosphoserine). A compositionally biased stretch (basic and acidic residues) spans 134 to 146; it reads PTGRVEIKKEKGK. A compositionally biased stretch (low complexity) spans 152–167; it reads SSQSSAVSSVTTSVTT. The span at 173-187 shows a compositional bias: polar residues; the sequence is ENSGSQSPEVSSSDS. The stretch at 216-628 forms a coiled coil; sequence GSMSHELSNL…LEQQLHSAAT (413 aa). The helical; Anchor for type IV membrane protein transmembrane segment at 696–716 threads the bilayer; sequence VFVIIYMALLHLWVMIVLLTY. Residues 717-728 lie on the Lumenal side of the membrane; sequence SPEMHHDQPYGK.

Homodimer. Interacts with RAB1A that has been activated by GTP-binding. Interacts with isoform CASP of CUX1. In terms of processing, highly phosphorylated during mitosis. Phosphorylation is barely detectable during interphase.

It localises to the golgi apparatus membrane. In terms of biological role, involved in maintaining Golgi structure. Stimulates the formation of Golgi stacks and ribbons. Involved in intra-Golgi retrograde transport. This is Golgin subfamily A member 5 (Golga5) from Rattus norvegicus (Rat).